We begin with the raw amino-acid sequence, 299 residues long: Plasmodesmata-located protein 5 (299 aa).

Residues 1–25 (MIKTKTTSLLCFLLTAVILMNPSSS) form the signal peptide. Residues 26–264 (SPTDNYIYAV…NKDDNGVGKT (239 aa)) are Extracellular-facing. 2 Gnk2-homologous domains span residues 29 to 135 (DNYI…NKSF) and 137 to 237 (GVQD…VGGS). Cystine bridges form between C36/C113, C89/C98, C101/C126, C148/C215, C191/C200, and C203/C228. The helical transmembrane segment at 265-285 (LAIIIGIVTLIILLVVFLAFV) threads the bilayer. The tract at residues 265-285 (LAIIIGIVTLIILLVVFLAFV) is necessary and sufficient for plasmodesmal targeting. The Cytoplasmic portion of the chain corresponds to 286–299 (GKCCRKLQDEKWCK).

This sequence belongs to the cysteine-rich repeat secretory protein family. Plasmodesmata-located proteins (PDLD) subfamily. In terms of assembly, monomer. Interacts with PDLP1. As to quaternary structure, (Microbial infection) Interacts with Grapevine fanleaf virus (GFLV) 2B-MP. In terms of tissue distribution, highly expressed in inflorescence nodes and rosette senescent leaves. Mostly expressed in cell wall junctions between leaf epidermal and mesophyl cells, and to a lesser extent at the cross walls between epidermal or cortex cells within the hypocotyl (at protein level). Low vascular expression in seedling and mature leaf, but high expression in senescing leaves (at protein level).

It is found in the cell membrane. The protein resides in the cell junction. The protein localises to the plasmodesma. Its function is as follows. Modulates cell-to-cell trafficking. Has a positive role in innate immunity. Required for systemic acquired resistance (SAR) which is mediated by the signaling molecules azelaic acid (AzA), glycerol-3-phosphate (G3P), and salicylic acid (SA). Negative regulator of plasmodesmata permeability triggered by SA during immune responses, through regulation of callose deposition. Delays the trafficking of Tobacco Mosaic Virus (TMV) movement protein (MP). Required for symplastic signal transport. The chain is Plasmodesmata-located protein 5 from Arabidopsis thaliana (Mouse-ear cress).